The following is a 484-amino-acid chain: MAKDIRVRYAPSPTGLLHIGNARTALFNYLYARHHGGTFIIRIEDTDRKRHVEDGERSQLDNLRWLGIDWDESPETHENYRQSERLPLYQKYIDQLLAEGKAYKSYVTEEELAAERERQEAAGETPRYINEFLGMTEEEKAAYIAEREAAGIIPTVRLAVNESGIYKWHDIVKGDIEFEGGNIGGDWVIQKRDGYPTYNFAVVVDDHDMQISHVIRGDDHIANTPKQLMVYEALGWEAPEFGHMTLITNSETGKKLSKRDTNTLQFIEDYRKKGYLPEAVFNFIALLGWNPGGEDEIFSREELIKLFDENRLSKSPAAFDQKKLDWMSNDYIKHADFDKVFALCKPFLEEAGRLTDKAEKLVELYKPQMTAAEEIVPLTDLFFEDFPELTAAEKEVMAGETVPTVLEAFKAKLEAMSDDEFVTENIFSQIKAVQKETGIKGKNLFMPIRIAVSGEMHGPELPETIFLLGREKSIKHIDQVLATL.

Positions 11 to 21 (PSPTGLLHIGN) match the 'HIGH' region motif. The short motif at 255–259 (KLSKR) is the 'KMSKS' region element. K258 provides a ligand contact to ATP.

Belongs to the class-I aminoacyl-tRNA synthetase family. Glutamate--tRNA ligase type 1 subfamily. In terms of assembly, monomer.

It localises to the cytoplasm. The enzyme catalyses tRNA(Glu) + L-glutamate + ATP = L-glutamyl-tRNA(Glu) + AMP + diphosphate. Catalyzes the attachment of glutamate to tRNA(Glu) in a two-step reaction: glutamate is first activated by ATP to form Glu-AMP and then transferred to the acceptor end of tRNA(Glu). The polypeptide is Glutamate--tRNA ligase (Streptococcus thermophilus (strain CNRZ 1066)).